Here is a 792-residue protein sequence, read N- to C-terminus: Ribonucleoside-diphosphate reductase large subunit (792 aa).

The region spanning 1-92 is the ATP-cone domain; that stretch reads MHVIKRDGRQ…VSNLHKEAKK (92 aa). ATP is bound by residues 5–6, 11–17, threonine 53, and aspartate 57; these read KR and ERVMFDK. Lysine 17 is modified (N6-acetyllysine). 2 residues coordinate GDP: serine 202 and serine 217. A disulfide bridge links cysteine 218 with cysteine 444. DTTP-binding positions include 226 to 228, lysine 243, arginine 256, and 263 to 264; these read DSI and AG. At lysine 376 the chain carries N6-acetyllysine. Residue serine 427 is the Proton acceptor of the active site. Catalysis depends on cysteine 429, which acts as the Cysteine radical intermediate. Residues glutamate 431 and 604–607 contribute to the GDP site; that span reads TAST. Residue glutamate 431 is the Proton acceptor of the active site. A Phosphothreonine modification is found at threonine 751.

This sequence belongs to the ribonucleoside diphosphate reductase large chain family. Heterodimer of a large and a small subunit. Interacts with RRM2B. Interacts with AHCYL1 which inhibits its activity.

The protein resides in the cytoplasm. It catalyses the reaction a 2'-deoxyribonucleoside 5'-diphosphate + [thioredoxin]-disulfide + H2O = a ribonucleoside 5'-diphosphate + [thioredoxin]-dithiol. Under complex allosteric control mediated by deoxynucleoside triphosphates and ATP binding to separate specificity and activation sites on the M1 subunit. The type of nucleotide bound at the specificity site determines substrate preference. It seems probable that ATP makes the enzyme reduce CDP and UDP, dGTP favors ADP reduction and dTTP favors GDP reduction. Stimulated by ATP and inhibited by dATP binding to the activity site, the dATP inhibition is mediated by AHCYL1 which stabilizes dATP in the site. Its function is as follows. Provides the precursors necessary for DNA synthesis. Catalyzes the biosynthesis of deoxyribonucleotides from the corresponding ribonucleotides. In Pongo abelii (Sumatran orangutan), this protein is Ribonucleoside-diphosphate reductase large subunit (RRM1).